Here is a 73-residue protein sequence, read N- to C-terminus: Protein WFDC10B (73 aa).

An N-terminal signal peptide occupies residues 1-21 (MAPQTLLLVLVLCVLLLQAQG). Residues 28 to 73 (RMQRIKVCEKRPSIDLCIHHCSYFQKCETNKICCSAFCGNICMSIL) enclose the WAP domain.

As to expression, ubiquitously expressed.

The protein resides in the secreted. This is Protein WFDC10B (WFDC10B) from Homo sapiens (Human).